The following is a 335-amino-acid chain: MYPLARRILFALDAEKAHHFTLDALYTVYKLGLIPVTDNRTKPVKLMGMDLPNPVGLAAGLDKNGEYIDALGALGFGFIEIGTVTPNPQPGNPQPRLFRVPEHQGIINRMGFNNHGIDTMIRNIEKSKFSGVLGINIGKNAVTPIENAADDYLICLEKAYAHASYITVNISSPNTKNLRALQGGDELSALLEALKNKQAQLASVHGKYVPLAVKIAPDLDEAQIEDIAHVVKSVEMDGIIATNTTIDKSSLGSHPLAGEQGGLSGLPVHEKSNRVLKLLADHIDGKLPIIGVGGIMEGEDSADKIRLGATAVQVYSGLIYKGPALVKECLKALAR.

FMN is bound by residues 59–63 (AGLDK) and threonine 83. Lysine 63 contacts substrate. 108 to 112 (NRMGF) serves as a coordination point for substrate. FMN is bound by residues asparagine 136 and asparagine 169. Substrate is bound at residue asparagine 169. The active-site Nucleophile is the serine 172. A substrate-binding site is contributed by asparagine 174. Positions 214 and 242 each coordinate FMN. 243–244 (NT) is a binding site for substrate. Residues glycine 265, glycine 294, and 315–316 (YS) each bind FMN.

The protein belongs to the dihydroorotate dehydrogenase family. Type 2 subfamily. In terms of assembly, monomer. Requires FMN as cofactor.

It localises to the cell membrane. It catalyses the reaction (S)-dihydroorotate + a quinone = orotate + a quinol. The protein operates within pyrimidine metabolism; UMP biosynthesis via de novo pathway; orotate from (S)-dihydroorotate (quinone route): step 1/1. Its function is as follows. Catalyzes the conversion of dihydroorotate to orotate with quinone as electron acceptor. This Neisseria meningitidis serogroup B (strain ATCC BAA-335 / MC58) protein is Dihydroorotate dehydrogenase (quinone).